We begin with the raw amino-acid sequence, 423 residues long: Guanine nucleotide-binding protein subunit beta (423 aa).

WD repeat units lie at residues 90–120 (GHNN…LIWD), 132–162 (LDSQ…TIYR), 179–208 (GHTC…ALWD), 220–256 (DHLG…YIWD), 268–298 (VNDS…NMYD), 348–377 (DNQG…VVWD), and 389–419 (GHGG…KIWS).

The protein belongs to the WD repeat G protein beta family. As to quaternary structure, g proteins are composed of 3 units, alpha, beta and gamma. The beta-gamma subunit complex (STE4-STE18 complex) interacts with PLP1 and PLP2. Interacts with SYG1.

In terms of biological role, implicated in the a- and alpha-factor response pathway. The beta and gamma chains of the putative yeast mating response pathway G protein play a positive role in initiation of the mating response. The beta and gamma chains are required for the GTPase activity, for replacement of GDP by GTP, and for G protein-effector interaction. The sequence is that of Guanine nucleotide-binding protein subunit beta (STE4) from Saccharomyces cerevisiae (strain ATCC 204508 / S288c) (Baker's yeast).